The chain runs to 461 residues: ATP-dependent protease ATPase subunit HslU (461 aa).

Residues I18, 60–65, D274, E339, and R411 each bind ATP; that span reads GVGKTE.

Belongs to the ClpX chaperone family. HslU subfamily. A double ring-shaped homohexamer of HslV is capped on each side by a ring-shaped HslU homohexamer. The assembly of the HslU/HslV complex is dependent on binding of ATP.

The protein resides in the cytoplasm. Its function is as follows. ATPase subunit of a proteasome-like degradation complex; this subunit has chaperone activity. The binding of ATP and its subsequent hydrolysis by HslU are essential for unfolding of protein substrates subsequently hydrolyzed by HslV. HslU recognizes the N-terminal part of its protein substrates and unfolds these before they are guided to HslV for hydrolysis. The protein is ATP-dependent protease ATPase subunit HslU of Carboxydothermus hydrogenoformans (strain ATCC BAA-161 / DSM 6008 / Z-2901).